A 236-amino-acid chain; its full sequence is Ring protein 1 (236 aa).

In terms of assembly, homododecamer.

Its subcellular location is the virion. Functionally, forms the tail multi-ring barrel with ring protein 2, ring protein 3 and ring protein 4. The sequence is that of Ring protein 1 from Bacteroides intestinalis (Bacteroides phage PhiCrAss001).